The following is a 395-amino-acid chain: S-adenosylmethionine synthase (395 aa).

An ATP-binding site is contributed by His14. Asp16 provides a ligand contact to Mg(2+). Glu42 contacts K(+). Positions 55 and 98 each coordinate L-methionine. Positions 98 to 108 (QSPDIALGVDK) are flexible loop. ATP is bound by residues 174 to 176 (DGK), 240 to 241 (RF), Asp249, 255 to 256 (RK), Ala272, and Lys276. Residue Asp249 coordinates L-methionine. Lys280 contacts L-methionine.

Belongs to the AdoMet synthase family. Homotetramer; dimer of dimers. The cofactor is Mg(2+). It depends on K(+) as a cofactor.

It is found in the cytoplasm. The catalysed reaction is L-methionine + ATP + H2O = S-adenosyl-L-methionine + phosphate + diphosphate. The protein operates within amino-acid biosynthesis; S-adenosyl-L-methionine biosynthesis; S-adenosyl-L-methionine from L-methionine: step 1/1. In terms of biological role, catalyzes the formation of S-adenosylmethionine (AdoMet) from methionine and ATP. The overall synthetic reaction is composed of two sequential steps, AdoMet formation and the subsequent tripolyphosphate hydrolysis which occurs prior to release of AdoMet from the enzyme. The polypeptide is S-adenosylmethionine synthase (Thermotoga neapolitana (strain ATCC 49049 / DSM 4359 / NBRC 107923 / NS-E)).